The primary structure comprises 565 residues: Hemagglutinin-neuraminidase (565 aa).

The Intravirion segment spans residues 1–19 (MVAEDAPVRGTCRVLFRTT). A helical transmembrane segment spans residues 20–40 (TLLFLCTLLSLSISILYESLI). The Virion surface portion of the chain corresponds to 41–565 (TQNQIMSQAG…VPFIRQVTLS (525 aa)). N-linked (GlcNAc...) asparagine; by host glycans are attached at residues Asn-110 and Asn-139. Disulfide bonds link Cys-161/Cys-185, Cys-175/Cys-236, and Cys-227/Cys-240. An involved in neuraminidase activity region spans residues 223-228 (NRKSCS). Asn-267 carries N-linked (GlcNAc...) asparagine; by host glycosylation. Intrachain disulfides connect Cys-333–Cys-454, Cys-365–Cys-375, and Cys-448–Cys-458. Asn-504 carries N-linked (GlcNAc...) asparagine; by host glycosylation. Cys-528 and Cys-539 form a disulfide bridge.

This sequence belongs to the paramyxoviruses hemagglutinin-neuraminidase family. Homotetramer; composed of disulfide-linked homodimers. Interacts with F protein trimer.

The protein resides in the virion membrane. It localises to the host cell membrane. It catalyses the reaction Hydrolysis of alpha-(2-&gt;3)-, alpha-(2-&gt;6)-, alpha-(2-&gt;8)- glycosidic linkages of terminal sialic acid residues in oligosaccharides, glycoproteins, glycolipids, colominic acid and synthetic substrates.. Its function is as follows. Attaches the virus to sialic acid-containing cell receptors and thereby initiating infection. Binding of HN protein to the receptor induces a conformational change that allows the F protein to trigger virion/cell membranes fusion. Functionally, neuraminidase activity ensures the efficient spread of the virus by dissociating the mature virions from the neuraminic acid containing glycoproteins. The polypeptide is Hemagglutinin-neuraminidase (HN) (Canis lupus familiaris (Dog)).